A 458-amino-acid chain; its full sequence is UDP-N-acetylmuramoylalanine--D-glutamate ligase (458 aa).

ATP is bound at residue 124–130 (GSDGKTT).

It belongs to the MurCDEF family.

Its subcellular location is the cytoplasm. The catalysed reaction is UDP-N-acetyl-alpha-D-muramoyl-L-alanine + D-glutamate + ATP = UDP-N-acetyl-alpha-D-muramoyl-L-alanyl-D-glutamate + ADP + phosphate + H(+). It participates in cell wall biogenesis; peptidoglycan biosynthesis. In terms of biological role, cell wall formation. Catalyzes the addition of glutamate to the nucleotide precursor UDP-N-acetylmuramoyl-L-alanine (UMA). This Clostridium botulinum (strain ATCC 19397 / Type A) protein is UDP-N-acetylmuramoylalanine--D-glutamate ligase.